The chain runs to 448 residues: Chromosomal replication initiator protein DnaA (448 aa).

Positions 1-73 (MNTHLTETWE…VNALKLLTSK (73 aa)) are domain I, interacts with DnaA modulators. The segment at 73-109 (KKYNIDFIVTTEEKIEENQKNHNNEKSNIVVNDEMST) is domain II. Residues 110 to 326 (MLNPKYTFDS…GALIRIVAFS (217 aa)) are domain III, AAA+ region. ATP is bound by residues glycine 154, glycine 156, lysine 157, and threonine 158. The domain IV, binds dsDNA stretch occupies residues 327 to 448 (SLTNKEISID…KELNKRINQK (122 aa)).

The protein belongs to the DnaA family. Oligomerizes as a right-handed, spiral filament on DNA at oriC.

It is found in the cytoplasm. In terms of biological role, plays an essential role in the initiation and regulation of chromosomal replication. ATP-DnaA binds to the origin of replication (oriC) to initiate formation of the DNA replication initiation complex once per cell cycle. Binds the DnaA box (a 9 base pair repeat at the origin) and separates the double-stranded (ds)DNA. Forms a right-handed helical filament on oriC DNA; dsDNA binds to the exterior of the filament while single-stranded (ss)DNA is stabiized in the filament's interior. The ATP-DnaA-oriC complex binds and stabilizes one strand of the AT-rich DNA unwinding element (DUE), permitting loading of DNA polymerase. After initiation quickly degrades to an ADP-DnaA complex that is not apt for DNA replication. Binds acidic phospholipids. This Clostridium botulinum (strain ATCC 19397 / Type A) protein is Chromosomal replication initiator protein DnaA.